Here is a 163-residue protein sequence, read N- to C-terminus: 16S rRNA aminocarboxypropyltransferase (163 aa).

4 residues coordinate S-adenosyl-L-methionine: threonine 18, isoleucine 66, leucine 87, and serine 106.

It belongs to the TDD superfamily. TSR3 family.

The protein localises to the cytoplasm. The enzyme catalyses an N(1)-methylpseudouridine in rRNA + S-adenosyl-L-methionine = N(1)-methyl-N(3)-[(3S)-3-amino-3-carboxypropyl]pseudouridine in rRNA + S-methyl-5'-thioadenosine + H(+). Its function is as follows. Aminocarboxypropyltransferase that catalyzes the aminocarboxypropyl transfer on pseudouridine corresponding to position 914 in M.jannaschii 16S rRNA. It constitutes the last step in biosynthesis of the hypermodified N1-methyl-N3-(3-amino-3-carboxypropyl) pseudouridine (m1acp3-Psi). The polypeptide is 16S rRNA aminocarboxypropyltransferase (Thermoplasma acidophilum (strain ATCC 25905 / DSM 1728 / JCM 9062 / NBRC 15155 / AMRC-C165)).